A 128-amino-acid polypeptide reads, in one-letter code: MSIRRTFFSYKRETVQYPACPRQHQYIMIVNRVSISSCVRGARSIHRKARPTIFLVGSVGWNGEAEISYSLSVTVILSNISPHKRDDGGFPAFIAAWEIVAAVNMVLARLRTDLGNSATCSPPAESIS.

This is an uncharacterized protein from Gallus gallus (Chicken).